We begin with the raw amino-acid sequence, 452 residues long: 23S rRNA (uracil(1939)-C(5))-methyltransferase RlmD (452 aa).

The segment at 1-23 (MSRKKSNGGLRFQPAGGNRATQI) is disordered. Residues 22 to 80 (QIPVGKKQRLLIERVAGDGRGIAFIEGRTWFVSGALGGEEVEARVLGARGKVVEARLER) enclose the TRAM domain. Positions 93, 99, 102, and 181 each coordinate [4Fe-4S] cluster. S-adenosyl-L-methionine-binding residues include Gln-285, Phe-314, Asn-319, Glu-335, Asp-362, and Asp-383. The Nucleophile role is filled by Cys-409.

This sequence belongs to the class I-like SAM-binding methyltransferase superfamily. RNA M5U methyltransferase family. RlmD subfamily.

It carries out the reaction uridine(1939) in 23S rRNA + S-adenosyl-L-methionine = 5-methyluridine(1939) in 23S rRNA + S-adenosyl-L-homocysteine + H(+). In terms of biological role, catalyzes the formation of 5-methyl-uridine at position 1939 (m5U1939) in 23S rRNA. The sequence is that of 23S rRNA (uracil(1939)-C(5))-methyltransferase RlmD from Pseudomonas entomophila (strain L48).